Reading from the N-terminus, the 592-residue chain is Putative nucleoside-triphosphatase (592 aa).

Glu200 acts as the Proton acceptor in catalysis.

Belongs to the GDA1/CD39 NTPase family.

It carries out the reaction a ribonucleoside 5'-triphosphate + H2O = a ribonucleoside 5'-diphosphate + phosphate + H(+). In Toxoplasma gondii, this protein is Putative nucleoside-triphosphatase (NTP4).